The primary structure comprises 127 residues: Biogenesis of lysosome-related organelles complex 1 subunit 2 (127 aa).

This sequence belongs to the BLOC1S2 family. Component of the biogenesis of lysosome-related organelles complex-1 (BLOC-1). Interacts with BLOS1 and SNX1.

The protein resides in the cytoplasm. It localises to the endosome. Functionally, component of the biogenesis of lysosome-related organelles complex-1 (BLOC-1), a complex that mediates the vacuolar degradative transport via the intracellular vesicle trafficking from the endosome to the vacuole. This chain is Biogenesis of lysosome-related organelles complex 1 subunit 2 (BLOS2), found in Arabidopsis thaliana (Mouse-ear cress).